Reading from the N-terminus, the 1265-residue chain is Methionine synthase (1265 aa).

A Hcy-binding domain is found at 19 to 338; the sequence is QDEIEAILQE…DHIREIAEAV (320 aa). 3 residues coordinate Zn(2+): Cys-260, Cys-323, and Cys-324. In terms of domain architecture, Pterin-binding spans 371 to 632; it reads FVNIGERCNV…IHKELLQLCE (262 aa). (6S)-5,6,7,8-tetrahydrofolate contacts are provided by residues 382-384, Asp-449, Asn-470, Asp-537, Asn-579, Arg-585, and Arg-591; that span reads GSR. Residues 662–759 enclose the B12-binding N-terminal domain; it reads QTDEWRNGPL…FMEKEREETK (98 aa). Residues Glu-709, 782 to 786, His-785, Ser-830, Thr-834, and Ala-886 contribute to the methylcob(III)alamin site; that span reads GDVHD. The B12-binding domain maps to 772–907; the sequence is QGTIVLATVK…DENLKDEYFE (136 aa). Positions 923–1265 constitute an AdoMet activation domain; sequence SLKERRYLTL…LGPILGYDTD (343 aa). S-adenosyl-L-methionine contacts are provided by residues Asp-974, Arg-1172, and 1227–1228; that span reads YF. The residue at position 1264 (Thr-1264) is a Phosphothreonine.

It belongs to the vitamin-B12 dependent methionine synthase family. Monomer. Dimer. Forms a multiprotein complex with MMACHC, MMADHC and MTRR. Requires methylcob(III)alamin as cofactor. The cofactor is Zn(2+).

The protein localises to the cytoplasm. It carries out the reaction (6S)-5-methyl-5,6,7,8-tetrahydrofolate + L-homocysteine = (6S)-5,6,7,8-tetrahydrofolate + L-methionine. The protein operates within amino-acid biosynthesis; L-methionine biosynthesis via de novo pathway; L-methionine from L-homocysteine (MetH route): step 1/1. Its function is as follows. Catalyzes the transfer of a methyl group from methylcob(III)alamin (MeCbl) to homocysteine, yielding enzyme-bound cob(I)alamin and methionine in the cytosol. MeCbl is an active form of cobalamin (vitamin B12) used as a cofactor for methionine biosynthesis. Cob(I)alamin form is regenerated to MeCbl by a transfer of a methyl group from 5-methyltetrahydrofolate. The processing of cobalamin in the cytosol occurs in a multiprotein complex composed of at least MMACHC, MMADHC, MTRR (methionine synthase reductase) and MTR which may contribute to shuttle safely and efficiently cobalamin towards MTR in order to produce methionine. The sequence is that of Methionine synthase (MTR) from Bos taurus (Bovine).